The primary structure comprises 552 residues: Formate--tetrahydrofolate ligase (552 aa).

63–70 (TPFGEGKT) is a binding site for ATP.

This sequence belongs to the formate--tetrahydrofolate ligase family.

It catalyses the reaction (6S)-5,6,7,8-tetrahydrofolate + formate + ATP = (6R)-10-formyltetrahydrofolate + ADP + phosphate. Its pathway is one-carbon metabolism; tetrahydrofolate interconversion. The protein is Formate--tetrahydrofolate ligase of Caldicellulosiruptor bescii (strain ATCC BAA-1888 / DSM 6725 / KCTC 15123 / Z-1320) (Anaerocellum thermophilum).